Reading from the N-terminus, the 565-residue chain is Probable transcription factor lepB (565 aa).

Residues 52–259 are fungal specific transcription factor domain; it reads KRYAEDVTYL…PRNLDDRDLD (208 aa).

It is found in the nucleus. In terms of biological role, probable transcription factor; part of the gene cluster 23 that mediates the biosynthesis of a family of 2-pyridones known as leporins. This chain is Probable transcription factor lepB, found in Aspergillus flavus (strain ATCC 200026 / FGSC A1120 / IAM 13836 / NRRL 3357 / JCM 12722 / SRRC 167).